Here is a 472-residue protein sequence, read N- to C-terminus: UDP-glycosyltransferase 100 (472 aa).

Histidine 15 functions as the Proton acceptor in the catalytic mechanism. An anthocyanidin is bound at residue histidine 15. The active-site Charge relay is the aspartate 117. 7 residues coordinate UDP-alpha-D-glucose: alanine 344, glutamine 346, histidine 361, tryptophan 364, asparagine 365, serine 366, and glutamate 369. Glycine 384 contributes to the an anthocyanidin binding site. Positions 385 and 386 each coordinate UDP-alpha-D-glucose.

This sequence belongs to the UDP-glycosyltransferase family.

It carries out the reaction (20S)-protopanaxadiol + UDP-alpha-D-glucose = (20S)-ginsenoside C-K + UDP + H(+). The enzyme catalyses (20S)-protopanaxatriol + UDP-alpha-D-glucose = (20S)-ginsenoside Rh1 + UDP + H(+). The catalysed reaction is (20S)-ginsenoside F1 + UDP-alpha-D-glucose = (20S)-ginsenoside Rg1 + UDP + H(+). The protein operates within secondary metabolite biosynthesis; terpenoid biosynthesis. Component of the dammarane-type triterpene saponins (e.g. PPT-type ginsenosides or panaxosides) biosynthetic pathway. Glycosyltransferase that catalyzes the biosynthesis of ginsenoside Rh1 from protopanaxatriol (PPT) and the conversion of ginsenoside F1 to ginsenoside Rg1. This chain is UDP-glycosyltransferase 100, found in Panax ginseng (Korean ginseng).